Here is a 44-residue protein sequence, read N- to C-terminus: Photosystem I reaction center subunit IX (44 aa).

The chain crosses the membrane as a helical span at residues Tyr-7–Ile-27.

It belongs to the PsaJ family.

It is found in the plastid. Its subcellular location is the chloroplast thylakoid membrane. Its function is as follows. May help in the organization of the PsaE and PsaF subunits. The sequence is that of Photosystem I reaction center subunit IX from Calycanthus floridus var. glaucus (Eastern sweetshrub).